The primary structure comprises 413 residues: Multifunctional CCA protein (413 aa).

2 residues coordinate ATP: glycine 8 and arginine 11. Positions 8 and 11 each coordinate CTP. Residues aspartate 21 and aspartate 23 each coordinate Mg(2+). Residues arginine 91, arginine 137, and arginine 140 each contribute to the ATP site. 3 residues coordinate CTP: arginine 91, arginine 137, and arginine 140. An HD domain is found at 228–329; sequence TGVHTLMTLS…VKLFDAIDAW (102 aa).

The protein belongs to the tRNA nucleotidyltransferase/poly(A) polymerase family. Bacterial CCA-adding enzyme type 1 subfamily. In terms of assembly, monomer. Can also form homodimers and oligomers. Mg(2+) serves as cofactor. It depends on Ni(2+) as a cofactor.

The enzyme catalyses a tRNA precursor + 2 CTP + ATP = a tRNA with a 3' CCA end + 3 diphosphate. It catalyses the reaction a tRNA with a 3' CCA end + 2 CTP + ATP = a tRNA with a 3' CCACCA end + 3 diphosphate. In terms of biological role, catalyzes the addition and repair of the essential 3'-terminal CCA sequence in tRNAs without using a nucleic acid template. Adds these three nucleotides in the order of C, C, and A to the tRNA nucleotide-73, using CTP and ATP as substrates and producing inorganic pyrophosphate. tRNA 3'-terminal CCA addition is required both for tRNA processing and repair. Also involved in tRNA surveillance by mediating tandem CCA addition to generate a CCACCA at the 3' terminus of unstable tRNAs. While stable tRNAs receive only 3'-terminal CCA, unstable tRNAs are marked with CCACCA and rapidly degraded. In Salmonella typhimurium (strain LT2 / SGSC1412 / ATCC 700720), this protein is Multifunctional CCA protein.